We begin with the raw amino-acid sequence, 581 residues long: Aspartate--tRNA ligase (581 aa).

Glu-170 provides a ligand contact to L-aspartate. Residues 194–197 (QLFK) form an aspartate region. Residue Arg-216 participates in L-aspartate binding. ATP contacts are provided by residues 216–218 (RDE) and Gln-225. His-439 is a binding site for L-aspartate. An ATP-binding site is contributed by Glu-468. Arg-475 contacts L-aspartate. Residue 520-523 (GFDR) coordinates ATP.

Belongs to the class-II aminoacyl-tRNA synthetase family. Type 1 subfamily. Homodimer.

It is found in the cytoplasm. It catalyses the reaction tRNA(Asp) + L-aspartate + ATP = L-aspartyl-tRNA(Asp) + AMP + diphosphate. In terms of biological role, catalyzes the attachment of L-aspartate to tRNA(Asp) in a two-step reaction: L-aspartate is first activated by ATP to form Asp-AMP and then transferred to the acceptor end of tRNA(Asp). The polypeptide is Aspartate--tRNA ligase (Thermosipho melanesiensis (strain DSM 12029 / CIP 104789 / BI429)).